The sequence spans 37 residues: Fructose-bisphosphate aldolase A (37 aa).

Belongs to the class I fructose-bisphosphate aldolase family. In terms of assembly, tetramer.

The catalysed reaction is beta-D-fructose 1,6-bisphosphate = D-glyceraldehyde 3-phosphate + dihydroxyacetone phosphate. Its pathway is carbohydrate degradation; glycolysis; D-glyceraldehyde 3-phosphate and glycerone phosphate from D-glucose: step 4/4. Its function is as follows. Plays a key role in glycolysis and gluconeogenesis. This is Fructose-bisphosphate aldolase A from Thunnus albacares (Yellowfin tuna).